A 377-amino-acid chain; its full sequence is Nitric oxide reductase FlRd-NAD(+) reductase (377 aa).

It belongs to the FAD-dependent oxidoreductase family. FAD is required as a cofactor.

It is found in the cytoplasm. The enzyme catalyses 2 reduced [nitric oxide reductase rubredoxin domain] + NAD(+) + H(+) = 2 oxidized [nitric oxide reductase rubredoxin domain] + NADH. Its pathway is nitrogen metabolism; nitric oxide reduction. One of at least two accessory proteins for anaerobic nitric oxide (NO) reductase. Reduces the rubredoxin moiety of NO reductase. In Escherichia coli O81 (strain ED1a), this protein is Nitric oxide reductase FlRd-NAD(+) reductase.